Consider the following 320-residue polypeptide: Lipoyl synthase (320 aa).

[4Fe-4S] cluster is bound by residues Cys-67, Cys-72, Cys-78, Cys-93, Cys-97, Cys-100, and Ser-307. The 218-residue stretch at Phe-79–Glu-296 folds into the Radical SAM core domain.

It belongs to the radical SAM superfamily. Lipoyl synthase family. [4Fe-4S] cluster serves as cofactor.

The protein localises to the cytoplasm. The catalysed reaction is [[Fe-S] cluster scaffold protein carrying a second [4Fe-4S](2+) cluster] + N(6)-octanoyl-L-lysyl-[protein] + 2 oxidized [2Fe-2S]-[ferredoxin] + 2 S-adenosyl-L-methionine + 4 H(+) = [[Fe-S] cluster scaffold protein] + N(6)-[(R)-dihydrolipoyl]-L-lysyl-[protein] + 4 Fe(3+) + 2 hydrogen sulfide + 2 5'-deoxyadenosine + 2 L-methionine + 2 reduced [2Fe-2S]-[ferredoxin]. The protein operates within protein modification; protein lipoylation via endogenous pathway; protein N(6)-(lipoyl)lysine from octanoyl-[acyl-carrier-protein]: step 2/2. Functionally, catalyzes the radical-mediated insertion of two sulfur atoms into the C-6 and C-8 positions of the octanoyl moiety bound to the lipoyl domains of lipoate-dependent enzymes, thereby converting the octanoylated domains into lipoylated derivatives. In Actinobacillus succinogenes (strain ATCC 55618 / DSM 22257 / CCUG 43843 / 130Z), this protein is Lipoyl synthase.